The sequence spans 167 residues: MDQTEAAQRWLGIDPGLAIIGWAILDGQPDLSAHLVDYGIIETSKNLSTPERLVEIEQDIHVLLEEFSPQAIAMEMPFFSRQIKAAGGVMQALGVINLVIYREKSIQPVFLHQSSWKCHLGNGKANKAEVAAMVQNFFGLEDLPIDDSVDAIAIALAGLNGVRNDIG.

Residues Asp-14, Glu-75, and Asp-147 contribute to the active site. 3 residues coordinate Mg(2+): Asp-14, Glu-75, and Asp-147.

The protein belongs to the RuvC family. In terms of assembly, homodimer which binds Holliday junction (HJ) DNA. The HJ becomes 2-fold symmetrical on binding to RuvC with unstacked arms; it has a different conformation from HJ DNA in complex with RuvA. In the full resolvosome a probable DNA-RuvA(4)-RuvB(12)-RuvC(2) complex forms which resolves the HJ. Mg(2+) serves as cofactor.

It localises to the cytoplasm. The catalysed reaction is Endonucleolytic cleavage at a junction such as a reciprocal single-stranded crossover between two homologous DNA duplexes (Holliday junction).. The RuvA-RuvB-RuvC complex processes Holliday junction (HJ) DNA during genetic recombination and DNA repair. Endonuclease that resolves HJ intermediates. Cleaves cruciform DNA by making single-stranded nicks across the HJ at symmetrical positions within the homologous arms, yielding a 5'-phosphate and a 3'-hydroxyl group; requires a central core of homology in the junction. The consensus cleavage sequence is 5'-(A/T)TT(C/G)-3'. Cleavage occurs on the 3'-side of the TT dinucleotide at the point of strand exchange. HJ branch migration catalyzed by RuvA-RuvB allows RuvC to scan DNA until it finds its consensus sequence, where it cleaves and resolves the cruciform DNA. This is Crossover junction endodeoxyribonuclease RuvC from Synechocystis sp. (strain ATCC 27184 / PCC 6803 / Kazusa).